Consider the following 493-residue polypeptide: MGFHQIDERNQALLSKIALDDGHGENSPYFDGWKAYDNDPFHPENNPLGVIQMGLAENQLSFDMIVDWIRKHPEASICTPEGLERFKSIANFQDYHGLPEFRNAIANFMGKVRGGRVKFDPSRIVMGGGATGASETVIFCLADPGDAFLVPSPYYAGFDRDLKWRTRAQIIRVHCNGSNNFQVTKAALEIAYKKAQEANMKVKGVIITNPSNPLGTTYDRDTLKTLVTFVNQHDIHLICDEIYSATVFKAPTFTSIAEIVEQMEHCKKELIHILYSLSKDMGLPGFRVGIIYSYNDVVVRRARQMSSFGLVSSQTQHLLAAMLSDEDFVDKFLAENSKRVGERHARFTKELDKMGITCLNSNAGVFVWMDLRRLLKDQTFKAEMELWRVIINEVKLNVSPGSSFHVTEPGWFRVCFANMDDNTVDVALNRIHSFVENIDKKEDNTVAMPSKTRHRDNKLRLSFSFSGRRYDEGNVLNSPHTMSPHSPLVIAKN.

Lys-279 is modified (N6-(pyridoxal phosphate)lysine).

It belongs to the class-I pyridoxal-phosphate-dependent aminotransferase family. In terms of assembly, homodimer. Pyridoxal 5'-phosphate serves as cofactor.

The enzyme catalyses S-adenosyl-L-methionine = 1-aminocyclopropane-1-carboxylate + S-methyl-5'-thioadenosine + H(+). It participates in alkene biosynthesis; ethylene biosynthesis via S-adenosyl-L-methionine; ethylene from S-adenosyl-L-methionine: step 1/2. Catalyzes the formation of 1-aminocyclopropane-1-carboxylate, a direct precursor of ethylene in higher plants. The sequence is that of 1-aminocyclopropane-1-carboxylate synthase 1 (ACC1A) from Cucurbita pepo (Vegetable marrow).